The primary structure comprises 195 residues: MNYLVFKVIYANANVVIGEHNFIGYQIRVPKDYELEVNKFCKLYLYEYASIMPNKNLIIKDLYGFRTYNERLLFIDLISINSIGPKTAINILKYDINLIIDAIATKDVDFLATIKGVNQRSANLICDQLNYKYINKVSEKNPWAKELSIGLENLGYDKKDIEYAITKVKVDTQQNIDISEIIGCAIKEISLRHEN.

The segment at 1 to 66 is domain I; it reads MNYLVFKVIY…LIIKDLYGFR (66 aa). Positions 67–141 are domain II; it reads TYNERLLFID…KYINKVSEKN (75 aa). A region of interest (flexible linker) is located at residue asparagine 141. The domain III stretch occupies residues 141–195; it reads NPWAKELSIGLENLGYDKKDIEYAITKVKVDTQQNIDISEIIGCAIKEISLRHEN.

It belongs to the RuvA family. In terms of assembly, homotetramer. Forms an RuvA(8)-RuvB(12)-Holliday junction (HJ) complex. HJ DNA is sandwiched between 2 RuvA tetramers; dsDNA enters through RuvA and exits via RuvB. An RuvB hexamer assembles on each DNA strand where it exits the tetramer. Each RuvB hexamer is contacted by two RuvA subunits (via domain III) on 2 adjacent RuvB subunits; this complex drives branch migration. In the full resolvosome a probable DNA-RuvA(4)-RuvB(12)-RuvC(2) complex forms which resolves the HJ.

Its subcellular location is the cytoplasm. In terms of biological role, the RuvA-RuvB-RuvC complex processes Holliday junction (HJ) DNA during genetic recombination and DNA repair, while the RuvA-RuvB complex plays an important role in the rescue of blocked DNA replication forks via replication fork reversal (RFR). RuvA specifically binds to HJ cruciform DNA, conferring on it an open structure. The RuvB hexamer acts as an ATP-dependent pump, pulling dsDNA into and through the RuvAB complex. HJ branch migration allows RuvC to scan DNA until it finds its consensus sequence, where it cleaves and resolves the cruciform DNA. The chain is Holliday junction branch migration complex subunit RuvA from Ureaplasma urealyticum serovar 10 (strain ATCC 33699 / Western).